The chain runs to 453 residues: Ribosomal protein uS12 methylthiotransferase RimO (453 aa).

Positions 5–120 constitute an MTTase N-terminal domain; it reads PKVGFVSLGC…VMQAVHSHLP (116 aa). [4Fe-4S] cluster-binding residues include cysteine 14, cysteine 50, cysteine 79, cysteine 151, cysteine 155, and cysteine 158. In terms of domain architecture, Radical SAM core spans 137–382; the sequence is LTPRHYAYLK…MEVAEEVSAR (246 aa). Residues 385 to 453 form the TRAM domain; the sequence is ARKVGKTLKV…ADGHDLWGEV (69 aa).

The protein belongs to the methylthiotransferase family. RimO subfamily. It depends on [4Fe-4S] cluster as a cofactor.

It localises to the cytoplasm. The enzyme catalyses L-aspartate(89)-[ribosomal protein uS12]-hydrogen + (sulfur carrier)-SH + AH2 + 2 S-adenosyl-L-methionine = 3-methylsulfanyl-L-aspartate(89)-[ribosomal protein uS12]-hydrogen + (sulfur carrier)-H + 5'-deoxyadenosine + L-methionine + A + S-adenosyl-L-homocysteine + 2 H(+). In terms of biological role, catalyzes the methylthiolation of an aspartic acid residue of ribosomal protein uS12. The polypeptide is Ribosomal protein uS12 methylthiotransferase RimO (Burkholderia multivorans (strain ATCC 17616 / 249)).